The chain runs to 97 residues: MPSQMEHAMETMMLTFHRFAGDKDHLTKEDLRVLMEREFPGFLENQKDPLAVDKIMKDLDQCRDGKVGFQSFLSLVAGLTIACNDYFVVNMKQKGKK.

Lys-23, Lys-28, Lys-54, and Lys-57 each carry N6-acetyllysine. Positions Lys-47–Ala-82 constitute an EF-hand domain. An ancestral calcium site region spans residues Asp-60 to Ser-71.

It belongs to the S-100 family. Heterotetramer containing 2 light chains of S100A10/p11 and 2 heavy chains of ANXA2/p36. Interacts with SCN10A. Interacts with TASOR.

Functionally, because S100A10 induces the dimerization of ANXA2/p36, it may function as a regulator of protein phosphorylation in that the ANXA2 monomer is the preferred target (in vitro) of tyrosine-specific kinase. This chain is Protein S100-A10 (S100a10), found in Mus musculus (Mouse).